A 140-amino-acid polypeptide reads, in one-letter code: Nucleoside diphosphate kinase (140 aa).

ATP-binding residues include K11, F59, R87, T93, R104, and N114. The active-site Pros-phosphohistidine intermediate is the H117.

This sequence belongs to the NDK family. As to quaternary structure, homotetramer. It depends on Mg(2+) as a cofactor.

It localises to the cytoplasm. It carries out the reaction a 2'-deoxyribonucleoside 5'-diphosphate + ATP = a 2'-deoxyribonucleoside 5'-triphosphate + ADP. It catalyses the reaction a ribonucleoside 5'-diphosphate + ATP = a ribonucleoside 5'-triphosphate + ADP. Major role in the synthesis of nucleoside triphosphates other than ATP. The ATP gamma phosphate is transferred to the NDP beta phosphate via a ping-pong mechanism, using a phosphorylated active-site intermediate. This is Nucleoside diphosphate kinase from Bradyrhizobium sp. (strain BTAi1 / ATCC BAA-1182).